Consider the following 339-residue polypeptide: GTPase Obg (339 aa).

In terms of domain architecture, Obg spans 1 to 159 (MKFVDEAFVR…RELKLELKLL (159 aa)). Residues 127–147 (NTHFKSSTNRAPRRTTSGEEG) are disordered. One can recognise an OBG-type G domain in the interval 160-333 (ADVGLLGLPN…LCYDLMSFLE (174 aa)). GTP is bound by residues 166-173 (GLPNAGKS), 191-195 (FTTLY), 213-216 (DIPG), 283-286 (NKID), and 314-316 (SAI). Serine 173 and threonine 193 together coordinate Mg(2+).

Belongs to the TRAFAC class OBG-HflX-like GTPase superfamily. OBG GTPase family. Monomer. Mg(2+) is required as a cofactor.

The protein resides in the cytoplasm. In terms of biological role, an essential GTPase which binds GTP, GDP and possibly (p)ppGpp with moderate affinity, with high nucleotide exchange rates and a fairly low GTP hydrolysis rate. Plays a role in control of the cell cycle, stress response, ribosome biogenesis and in those bacteria that undergo differentiation, in morphogenesis control. The polypeptide is GTPase Obg (Coxiella burnetii (strain CbuK_Q154) (Coxiella burnetii (strain Q154))).